The following is a 204-amino-acid chain: HAUS augmin-like complex subunit 2 (204 aa).

Residues 54–84 (LAQKCHTLQSMNNHLEAVLKEKRSLRQRLLK) adopt a coiled-coil conformation.

The protein belongs to the HAUS2 family. As to quaternary structure, component of the HAUS augmin-like complex. The complex interacts with the gamma-tubulin ring complex and this interaction is required for spindle assembly. Interacts with EML3 (phosphorylated form).

The protein localises to the cytoplasm. Its subcellular location is the cytoskeleton. It is found in the microtubule organizing center. It localises to the centrosome. The protein resides in the spindle. The chain is HAUS augmin-like complex subunit 2 (HAUS2) from Pongo abelii (Sumatran orangutan).